The chain runs to 559 residues: Cellulose biosynthesis protein BcsG (559 aa).

4 helical membrane passes run 34-54, 68-88, 113-133, and 139-159; these read LLWA…MAFL, HWIA…LPGP, FINW…LFLS, and TVFV…GPVF.

Its subcellular location is the cell membrane. Required for cellulose biosynthesis. The sequence is that of Cellulose biosynthesis protein BcsG (bcsG) from Salmonella typhimurium (strain LT2 / SGSC1412 / ATCC 700720).